The primary structure comprises 367 residues: UDP-N-acetylglucosamine--N-acetylmuramyl-(pentapeptide) pyrophosphoryl-undecaprenol N-acetylglucosamine transferase (367 aa).

UDP-N-acetyl-alpha-D-glucosamine is bound by residues 13–15, Asn-127, Arg-168, Ser-200, Ile-251, and Gln-296; that span reads TGG.

This sequence belongs to the glycosyltransferase 28 family. MurG subfamily.

It localises to the cell inner membrane. The catalysed reaction is di-trans,octa-cis-undecaprenyl diphospho-N-acetyl-alpha-D-muramoyl-L-alanyl-D-glutamyl-meso-2,6-diaminopimeloyl-D-alanyl-D-alanine + UDP-N-acetyl-alpha-D-glucosamine = di-trans,octa-cis-undecaprenyl diphospho-[N-acetyl-alpha-D-glucosaminyl-(1-&gt;4)]-N-acetyl-alpha-D-muramoyl-L-alanyl-D-glutamyl-meso-2,6-diaminopimeloyl-D-alanyl-D-alanine + UDP + H(+). It functions in the pathway cell wall biogenesis; peptidoglycan biosynthesis. Functionally, cell wall formation. Catalyzes the transfer of a GlcNAc subunit on undecaprenyl-pyrophosphoryl-MurNAc-pentapeptide (lipid intermediate I) to form undecaprenyl-pyrophosphoryl-MurNAc-(pentapeptide)GlcNAc (lipid intermediate II). The chain is UDP-N-acetylglucosamine--N-acetylmuramyl-(pentapeptide) pyrophosphoryl-undecaprenol N-acetylglucosamine transferase from Flavobacterium psychrophilum (strain ATCC 49511 / DSM 21280 / CIP 103535 / JIP02/86).